The sequence spans 192 residues: Endoribonuclease YbeY (192 aa).

Zn(2+)-binding residues include H109, H113, and H119. The interval 142-192 (VGAALREGGPARAAETETSWTRSPTSTSTRSPSGSTARGTRARSSRAGSGR) is disordered. Low complexity predominate over residues 159-180 (TSWTRSPTSTSTRSPSGSTARG).

The protein belongs to the endoribonuclease YbeY family. The cofactor is Zn(2+).

It localises to the cytoplasm. Its function is as follows. Single strand-specific metallo-endoribonuclease involved in late-stage 70S ribosome quality control and in maturation of the 3' terminus of the 16S rRNA. The polypeptide is Endoribonuclease YbeY (Anaeromyxobacter sp. (strain Fw109-5)).